Reading from the N-terminus, the 114-residue chain is Iron-sulfur cluster insertion protein ErpA (114 aa).

The iron-sulfur cluster site is built by Cys42, Cys106, and Cys108.

Belongs to the HesB/IscA family. Homodimer. Iron-sulfur cluster serves as cofactor.

Required for insertion of 4Fe-4S clusters for at least IspG. The chain is Iron-sulfur cluster insertion protein ErpA from Pasteurella multocida (strain Pm70).